The chain runs to 760 residues: ATP-dependent RNA helicase dbp7 (760 aa).

Positions 23–34 are enriched in basic and acidic residues; that stretch reads KLKGGTWRDRLS. The segment at 23-129 is disordered; it reads KLKGGTWRDR…EPVEDAKPTN (107 aa). Positions 38–47 are enriched in basic residues; that stretch reads IAQHRTKNPR. The span at 58–72 shows a compositional bias: polar residues; that stretch reads KGPQNPNRIQVSSSR. Over residues 77-94 the composition is skewed to basic and acidic residues; that stretch reads QKTDADGDNEKSRHDNKQ. Over residues 99–110 the composition is skewed to polar residues; that stretch reads FVSSLFSKNPTP. Positions 137-166 match the Q motif motif; it reads DTFTNLGLSPSLAAHLLTKLELKAPTGIQK. A Helicase ATP-binding domain is found at 170-372; that stretch reads SQLLKEDSDA…EISLKDAVHI (203 aa). 183–190 is an ATP binding site; that stretch reads AETGSGKT. Residues 308-311 carry the DEAD box motif; sequence DEGD. In terms of domain architecture, Helicase C-terminal spans 396-609; that stretch reads QLKQSYAIVA…LTRTTAEDIL (214 aa). 2 disordered regions span residues 453–490 and 692–760; these read YRDE…AVAF and SKIN…FNLA. A compositionally biased stretch (acidic residues) spans 456 to 470; the sequence is ESEDEDEEKEDDDED. Over residues 701–716 the composition is skewed to basic and acidic residues; sequence PGDKEAKKDYKAERNT. The segment covering 731–740 has biased composition (polar residues); that stretch reads QPSNDATSAA.

Belongs to the DEAD box helicase family. DDX31/DBP7 subfamily.

It localises to the nucleus. The protein localises to the nucleolus. It catalyses the reaction ATP + H2O = ADP + phosphate + H(+). In terms of biological role, ATP-binding RNA helicase involved in the biogenesis of 60S ribosomal subunits and is required for the normal formation of 25S and 5.8S rRNAs. This chain is ATP-dependent RNA helicase dbp7 (dbp7), found in Aspergillus oryzae (strain ATCC 42149 / RIB 40) (Yellow koji mold).